Reading from the N-terminus, the 359-residue chain is MTLDSRYGGEVYGGSKVVKRMEKYRPQNAPKNRQRKLLLPLSYGISSSTLLHILNLQLERQISSGLGRRAYDIHVLNIGTCEQSDSHRLGLFREAYPLHTYTQVPLHSIFKHDTTIKDVISEYGGPEFADDPSKTDQERLDIFRLSLSTATARADIDGILLTRLVVAIAKEQDCDGILWGDSDTRLASKALSNVAKGRGFSVPWDVCDGMSPWGIQFNFPMRDLFKFELSTYASLALPKSLNVVDSERPSVDNLSNKNMSIEDLLAHYVETQGQKYPGVMANIVRTINKLQPQSADTDHKCMLCGMPVDYSGEDPAIIGGQGSSQYTLQDWRERPVAGTLCYGCARTRLDLVPPRSVSS.

It belongs to the CTU2/NCS2 family.

It is found in the cytoplasm. Its pathway is tRNA modification; 5-methoxycarbonylmethyl-2-thiouridine-tRNA biosynthesis. Plays a central role in 2-thiolation of mcm(5)S(2)U at tRNA wobble positions of tRNA(Lys), tRNA(Glu) and tRNA(Gln). May act by forming a heterodimer with NCS6 that ligates sulfur from thiocarboxylated URM1 onto the uridine of tRNAs at wobble position. Prior mcm(5) tRNA modification by the elongator complex is required for 2-thiolation. May also be involved in protein urmylation. The polypeptide is Cytoplasmic tRNA 2-thiolation protein 2 (Ajellomyces capsulatus (strain NAm1 / WU24) (Darling's disease fungus)).